Reading from the N-terminus, the 346-residue chain is MRSSVQPLINEIRQQFLHDLEQVQTTLELEQLKIKFLGKKGSLQGLMKELKNVEPDQRPLVGKFINELKEFMSNHCDELEHQLIAKEENAQLAHETIDVTLPGRQRFVGRKHPLTQAMDQIIHILSKMGFSVQYGPDIDTDYYNFEILNFPPEHPARDMQDTFYISPHVLLRTHTSNIQARAMELNRPPIRIIAPGKVYRNETITARSHVFFHQVEAVYIDQHVSFADLFATMDEFLKKLFKQTIETRYRPSYFPFVEPGLEVDISCLVCEGKGCQLCKHTGWVEVAGAGMIHPEVLKNGGIDPEHYSGFAWGMGLERLVMMLRGIQDIRLFTENDLRFLQQFTLL.

Glutamate 258 is a Mg(2+) binding site.

The protein belongs to the class-II aminoacyl-tRNA synthetase family. Phe-tRNA synthetase alpha subunit type 1 subfamily. As to quaternary structure, tetramer of two alpha and two beta subunits. The cofactor is Mg(2+).

It is found in the cytoplasm. The catalysed reaction is tRNA(Phe) + L-phenylalanine + ATP = L-phenylalanyl-tRNA(Phe) + AMP + diphosphate + H(+). This chain is Phenylalanine--tRNA ligase alpha subunit, found in Protochlamydia amoebophila (strain UWE25).